Consider the following 173-residue polypeptide: Large ribosomal subunit protein uL10 (173 aa).

This sequence belongs to the universal ribosomal protein uL10 family. Part of the ribosomal stalk of the 50S ribosomal subunit. The N-terminus interacts with L11 and the large rRNA to form the base of the stalk. The C-terminus forms an elongated spine to which L12 dimers bind in a sequential fashion forming a multimeric L10(L12)X complex.

Forms part of the ribosomal stalk, playing a central role in the interaction of the ribosome with GTP-bound translation factors. This chain is Large ribosomal subunit protein uL10, found in Cupriavidus pinatubonensis (strain JMP 134 / LMG 1197) (Cupriavidus necator (strain JMP 134)).